The chain runs to 132 residues: MCDAFVGTWKLVSSENFDDYMKEVGVGFATRKVAGMAKPTLIISVNGDVVTIKSESTFKNTEISFKLGQEFDEVTPDDRKVKSTINLDGGALVQVQNWDGKSTTIKRKLVDDKLVLECVMNGVTATRVYERA.

Cysteine 2 is subject to N-acetylcysteine. Serine 13 is subject to Phosphoserine. Tyrosine 20 carries the post-translational modification Phosphotyrosine; by Tyr-kinases. The short motif at 22 to 32 (KEVGVGFATRK) is the Nuclear localization signal element. 127-129 (RVY) contributes to the a fatty acid binding site.

It belongs to the calycin superfamily. Fatty-acid binding protein (FABP) family. In terms of assembly, monomer. Homodimer. Interacts with PPARG.

The protein resides in the cytoplasm. It localises to the nucleus. In terms of biological role, lipid transport protein in adipocytes. Binds both long chain fatty acids and retinoic acid. Delivers long-chain fatty acids and retinoic acid to their cognate receptors in the nucleus. The chain is Fatty acid-binding protein, adipocyte (FABP4) from Cervus elaphus (Red deer).